Reading from the N-terminus, the 147-residue chain is MAGSKSPKGEFAGRKLLLKRKASRWHHYKYVNKALSLKLKADPLEGAPMGRGIVVEKVGLEAKQPNSAIRKCVRVQLIKNGRQVTAFAPGNHAINFIDEHDEVVIEGIGGPSGQAKGDIPGVRYKVVMVGKNSIRELVRGRQEKVKR.

Belongs to the universal ribosomal protein uS12 family. Part of the 30S ribosomal subunit.

Functionally, with S4 and S5 plays an important role in translational accuracy. Located at the interface of the 30S and 50S subunits. The sequence is that of Small ribosomal subunit protein uS12 from Methanococcus maripaludis (strain C5 / ATCC BAA-1333).